The sequence spans 60 residues: MKFSSIILLTLLICSMSIFGNCQVQTNVKCQGGSCASVCRREIGVAAGKCINGKCVCYRN.

A signal peptide spans 1–22 (MKFSSIILLTLLICSMSIFGNC). Gln-23 bears the Pyrrolidone carboxylic acid mark. Cystine bridges form between Cys-30–Cys-50, Cys-35–Cys-55, and Cys-39–Cys-57.

This sequence belongs to the short scorpion toxin superfamily. Potassium channel inhibitor family. Alpha-KTx 15 subfamily. In terms of tissue distribution, expressed by the venom gland.

The protein resides in the secreted. Functionally, blocker of A-type voltage-gated potassium channels of cerebellar granular cells. May also inhibit Kv4/KCND when coexpressed with DPP6 or DPP10. The occlusion of the outer entry of the K(+) conducting pore is partially reversible and affects both open and closed channels. It shares the same target in rat brain than BmTX3 (AC Q8I0L5) and AmmTX3 (AC P60208). Also shows a weak inhibition on Kv1.2/KCNA2 and Kv1.3/KCNA3 voltage-gated potassium channels. This Olivierus martensii (Manchurian scorpion) protein is Potassium channel toxin alpha-KTx 15.8.